Here is a 202-residue protein sequence, read N- to C-terminus: Na(+)-translocating NADH-quinone reductase subunit E (202 aa).

The next 6 membrane-spanning stretches (helical) occupy residues 11-31 (SIFL…FLAV), 39-59 (MGLG…NQLV), 79-99 (LSFL…QILE), 114-134 (GIFL…AFAV), 144-164 (IFYG…LAAV), and 180-200 (LGSV…FSGV).

It belongs to the NqrDE/RnfAE family. As to quaternary structure, composed of six subunits; NqrA, NqrB, NqrC, NqrD, NqrE and NqrF.

The protein resides in the cell inner membrane. It catalyses the reaction a ubiquinone + n Na(+)(in) + NADH + H(+) = a ubiquinol + n Na(+)(out) + NAD(+). NQR complex catalyzes the reduction of ubiquinone-1 to ubiquinol by two successive reactions, coupled with the transport of Na(+) ions from the cytoplasm to the periplasm. NqrA to NqrE are probably involved in the second step, the conversion of ubisemiquinone to ubiquinol. This is Na(+)-translocating NADH-quinone reductase subunit E from Pseudoalteromonas atlantica (strain T6c / ATCC BAA-1087).